Here is a 349-residue protein sequence, read N- to C-terminus: Phosphoribosylformylglycinamidine cyclo-ligase (349 aa).

It belongs to the AIR synthase family.

It is found in the cytoplasm. It catalyses the reaction 2-formamido-N(1)-(5-O-phospho-beta-D-ribosyl)acetamidine + ATP = 5-amino-1-(5-phospho-beta-D-ribosyl)imidazole + ADP + phosphate + H(+). It functions in the pathway purine metabolism; IMP biosynthesis via de novo pathway; 5-amino-1-(5-phospho-D-ribosyl)imidazole from N(2)-formyl-N(1)-(5-phospho-D-ribosyl)glycinamide: step 2/2. The polypeptide is Phosphoribosylformylglycinamidine cyclo-ligase (Trichlorobacter lovleyi (strain ATCC BAA-1151 / DSM 17278 / SZ) (Geobacter lovleyi)).